The following is a 379-amino-acid chain: Reducing end xylose-releasing exo-oligoxylanase (379 aa).

E66 functions as the Proton donor in the catalytic mechanism. D259 functions as the Proton acceptor in the catalytic mechanism.

Belongs to the glycosyl hydrolase 8 (cellulase D) family.

The catalysed reaction is Hydrolysis of (1-&gt;4)-beta-D-xylose residues from the reducing end of oligosaccharides.. In terms of biological role, hydrolyzes xylooligosaccharides with a degree of polymerization of greater than or equal to 3, releasing xylose from the reducing end. Has low activity on birchwood xylan, oat spelt xylan and arabinoxylan. The protein is Reducing end xylose-releasing exo-oligoxylanase of Bifidobacterium adolescentis (strain ATCC 15703 / DSM 20083 / NCTC 11814 / E194a).